The sequence spans 385 residues: 1-deoxy-D-xylulose 5-phosphate reductoisomerase (385 aa).

NADPH is bound by residues Thr10, Gly11, Ser12, Ile13, Lys37, and Asn124. A 1-deoxy-D-xylulose 5-phosphate-binding site is contributed by Lys125. Glu126 is a binding site for NADPH. Asp150 is a binding site for Mn(2+). Positions 151, 152, 176, and 199 each coordinate 1-deoxy-D-xylulose 5-phosphate. Position 152 (Glu152) interacts with Mn(2+). Residue Gly205 participates in NADPH binding. 1-deoxy-D-xylulose 5-phosphate contacts are provided by Ser212, Asn217, Lys218, and Glu221. Glu221 contacts Mn(2+).

It belongs to the DXR family. The cofactor is Mg(2+). It depends on Mn(2+) as a cofactor.

It catalyses the reaction 2-C-methyl-D-erythritol 4-phosphate + NADP(+) = 1-deoxy-D-xylulose 5-phosphate + NADPH + H(+). Its pathway is isoprenoid biosynthesis; isopentenyl diphosphate biosynthesis via DXP pathway; isopentenyl diphosphate from 1-deoxy-D-xylulose 5-phosphate: step 1/6. Catalyzes the NADPH-dependent rearrangement and reduction of 1-deoxy-D-xylulose-5-phosphate (DXP) to 2-C-methyl-D-erythritol 4-phosphate (MEP). The sequence is that of 1-deoxy-D-xylulose 5-phosphate reductoisomerase from Clostridium botulinum (strain Loch Maree / Type A3).